The following is a 253-amino-acid chain: Triosephosphate isomerase (253 aa).

Residue 9 to 11 (NWK) participates in substrate binding. His95 functions as the Electrophile in the catalytic mechanism. Glu167 serves as the catalytic Proton acceptor. Residues Gly173, Ser213, and 234–235 (GG) contribute to the substrate site. Ser213 is modified (phosphoserine).

This sequence belongs to the triosephosphate isomerase family. In terms of assembly, homodimer.

It localises to the cytoplasm. It carries out the reaction D-glyceraldehyde 3-phosphate = dihydroxyacetone phosphate. It participates in carbohydrate biosynthesis; gluconeogenesis. The protein operates within carbohydrate degradation; glycolysis; D-glyceraldehyde 3-phosphate from glycerone phosphate: step 1/1. Its function is as follows. Involved in the gluconeogenesis. Catalyzes stereospecifically the conversion of dihydroxyacetone phosphate (DHAP) to D-glyceraldehyde-3-phosphate (G3P). The polypeptide is Triosephosphate isomerase (Bacillus licheniformis (strain ATCC 14580 / DSM 13 / JCM 2505 / CCUG 7422 / NBRC 12200 / NCIMB 9375 / NCTC 10341 / NRRL NRS-1264 / Gibson 46)).